A 134-amino-acid chain; its full sequence is Fluoride-specific ion channel FluC 2 (134 aa).

4 consecutive transmembrane segments (helical) span residues 1 to 21, 28 to 48, 68 to 88, and 92 to 112; these read MNYF…EITG, IFPV…LFFM, GFLG…LLLF, and LLIG…SGIL. Na(+) contacts are provided by glycine 71 and threonine 74.

It belongs to the fluoride channel Fluc/FEX (TC 1.A.43) family.

Its subcellular location is the cell membrane. The catalysed reaction is fluoride(in) = fluoride(out). With respect to regulation, na(+) is not transported, but it plays an essential structural role and its presence is essential for fluoride channel function. Its function is as follows. Fluoride-specific ion channel. Important for reducing fluoride concentration in the cell, thus reducing its toxicity. The chain is Fluoride-specific ion channel FluC 2 from Carboxydothermus hydrogenoformans (strain ATCC BAA-161 / DSM 6008 / Z-2901).